A 73-amino-acid polypeptide reads, in one-letter code: Small ribosomal subunit protein uS15c (73 aa).

Belongs to the universal ribosomal protein uS15 family. Part of the 30S ribosomal subunit.

The protein resides in the plastid. It localises to the chloroplast. This Welwitschia mirabilis (Tree tumbo) protein is Small ribosomal subunit protein uS15c (rps15).